The chain runs to 319 residues: Aliphatic sulfonates import ATP-binding protein SsuB (319 aa).

The 220-residue stretch at 63-282 folds into the ABC transporter domain; sequence VTLSGVSKRF…ARASAAFAAL (220 aa). Residue 95-102 coordinates ATP; that stretch reads GRSGCGKS.

Belongs to the ABC transporter superfamily. Aliphatic sulfonates importer (TC 3.A.1.17.2) family. In terms of assembly, the complex is composed of two ATP-binding proteins (SsuB), two transmembrane proteins (SsuC) and a solute-binding protein (SsuA).

It localises to the cell inner membrane. It carries out the reaction ATP + H2O + aliphatic sulfonate-[sulfonate-binding protein]Side 1 = ADP + phosphate + aliphatic sulfonateSide 2 + [sulfonate-binding protein]Side 1.. Its function is as follows. Part of the ABC transporter complex SsuABC involved in aliphatic sulfonates import. Responsible for energy coupling to the transport system. In Burkholderia ambifaria (strain ATCC BAA-244 / DSM 16087 / CCUG 44356 / LMG 19182 / AMMD) (Burkholderia cepacia (strain AMMD)), this protein is Aliphatic sulfonates import ATP-binding protein SsuB.